The chain runs to 109 residues: U4-lycotoxin-Ls1a (109 aa).

A signal peptide spans 1–22 (MKVLVLFSVLFLTLFSYSSTEA). The propeptide occupies 23–44 (IDEFDSDAEDDMLSLMANEQVR). The knottin domain stretch occupies residues 45–88 (AKACTPRLHDCSHDRHSCCRGELFKDVCYCFYPEGEDKTEVCSC). Intrachain disulfides connect cysteine 48–cysteine 63, cysteine 55–cysteine 72, cysteine 62–cysteine 88, and cysteine 74–cysteine 86. Residues 89–108 (QQPKSHKYIEKVVDKAKTVV) form a linear cationic cytotoxin domain region.

This sequence belongs to the neurotoxin 19 (CSTX) family. 05 (U4-Lctx) subfamily. Expressed by the venom gland.

Its subcellular location is the secreted. Its function is as follows. Enhances the high-affinity desensitization of human P2RX3 purinoceptors. The protein is U4-lycotoxin-Ls1a of Lycosa singoriensis (Wolf spider).